A 231-amino-acid chain; its full sequence is 5'-methylthioadenosine/S-adenosylhomocysteine nucleosidase (231 aa).

Residue Glu-12 is the Proton acceptor of the active site. Substrate contacts are provided by residues Gly-78, Met-153, and Met-174–Glu-175. Asp-198 functions as the Proton donor in the catalytic mechanism.

The protein belongs to the PNP/UDP phosphorylase family. MtnN subfamily.

The catalysed reaction is S-adenosyl-L-homocysteine + H2O = S-(5-deoxy-D-ribos-5-yl)-L-homocysteine + adenine. It carries out the reaction S-methyl-5'-thioadenosine + H2O = 5-(methylsulfanyl)-D-ribose + adenine. It catalyses the reaction 5'-deoxyadenosine + H2O = 5-deoxy-D-ribose + adenine. The protein operates within amino-acid biosynthesis; L-methionine biosynthesis via salvage pathway; S-methyl-5-thio-alpha-D-ribose 1-phosphate from S-methyl-5'-thioadenosine (hydrolase route): step 1/2. Its function is as follows. Catalyzes the irreversible cleavage of the glycosidic bond in both 5'-methylthioadenosine (MTA) and S-adenosylhomocysteine (SAH/AdoHcy) to adenine and the corresponding thioribose, 5'-methylthioribose and S-ribosylhomocysteine, respectively. Also cleaves 5'-deoxyadenosine, a toxic by-product of radical S-adenosylmethionine (SAM) enzymes, into 5-deoxyribose and adenine. The polypeptide is 5'-methylthioadenosine/S-adenosylhomocysteine nucleosidase (Psychromonas ingrahamii (strain DSM 17664 / CCUG 51855 / 37)).